Reading from the N-terminus, the 387-residue chain is Succinate--CoA ligase [ADP-forming] subunit beta (387 aa).

The 228-residue stretch at 9–236 (RDLFEKYGVP…KAAADPLEAK (228 aa)) folds into the ATP-grasp domain. Residues K45, 52–54 (GRG), A94, and E99 contribute to the ATP site. The Mg(2+) site is built by N191 and D205. Substrate-binding positions include N256 and 318-320 (GIT).

The protein belongs to the succinate/malate CoA ligase beta subunit family. As to quaternary structure, heterotetramer of two alpha and two beta subunits. It depends on Mg(2+) as a cofactor.

The enzyme catalyses succinate + ATP + CoA = succinyl-CoA + ADP + phosphate. The catalysed reaction is GTP + succinate + CoA = succinyl-CoA + GDP + phosphate. It participates in carbohydrate metabolism; tricarboxylic acid cycle; succinate from succinyl-CoA (ligase route): step 1/1. Succinyl-CoA synthetase functions in the citric acid cycle (TCA), coupling the hydrolysis of succinyl-CoA to the synthesis of either ATP or GTP and thus represents the only step of substrate-level phosphorylation in the TCA. The beta subunit provides nucleotide specificity of the enzyme and binds the substrate succinate, while the binding sites for coenzyme A and phosphate are found in the alpha subunit. The polypeptide is Succinate--CoA ligase [ADP-forming] subunit beta (Leifsonia xyli subsp. xyli (strain CTCB07)).